A 396-amino-acid polypeptide reads, in one-letter code: NDP-glycosyltransferase YjiC (396 aa).

Residues N18, T234, V283, H298, and 302–306 each bind UDP; that span reads NSTME.

It belongs to the UDP-glycosyltransferase family.

It catalyses the reaction an NDP-glycose + an acceptor = a glycosylated acceptor + NDP.. Its function is as follows. Glycosyltransferase that can glycosylate a wide range of substrates, including various flavonoids (flavones, flavonols, flavanones, flavanols, chalcones), isoflavonoids and stilbenes, to produce multiple glycosylated products. It can accept diverse nucleotide diphosphate-D/L-sugars as donors, including ADP-, GDP-, CDP-, TDP- or UDP-alpha-D-glucose, and catalyzes O-, N-, or S-glycosylation. In vitro, catalyzes the glycosylation of, among others, apigenin, 3-hydroxyflavone, phloretin or resveratrol, resulting in multiple glucosylated products, along with mono-, di-, tri- and tetraglucosides. Can also catalyze the glycosylation of the macrolide epothilone A with diverse NDP-D/L-sugars, forming different epothilone A glycoside derivatives. The polypeptide is NDP-glycosyltransferase YjiC (Bacillus licheniformis (strain ATCC 14580 / DSM 13 / JCM 2505 / CCUG 7422 / NBRC 12200 / NCIMB 9375 / NCTC 10341 / NRRL NRS-1264 / Gibson 46)).